We begin with the raw amino-acid sequence, 76 residues long: cAMP-dependent protein kinase inhibitor alpha (76 aa).

Residue Thr2 is modified to N-acetylthreonine. The tract at residues 49–76 (KTEGEEDAQRNSTEQSGEAQGEAAKSES) is disordered.

It belongs to the PKI family.

Extremely potent competitive inhibitor of cAMP-dependent protein kinase activity, this protein interacts with the catalytic subunit of the enzyme after the cAMP-induced dissociation of its regulatory chains. The polypeptide is cAMP-dependent protein kinase inhibitor alpha (PKIA) (Bos taurus (Bovine)).